The chain runs to 336 residues: Cell division protein ZipA (336 aa).

The Periplasmic segment spans residues Met1–Glu2. Residues Leu3–Leu23 form a helical membrane-spanning segment. The Cytoplasmic portion of the chain corresponds to Trp24–Ser336. A disordered region spans residues Ser57–Asp76. Positions Asn59 to His70 are enriched in polar residues.

The protein belongs to the ZipA family. In terms of assembly, interacts with FtsZ via their C-terminal domains.

The protein localises to the cell inner membrane. Essential cell division protein that stabilizes the FtsZ protofilaments by cross-linking them and that serves as a cytoplasmic membrane anchor for the Z ring. Also required for the recruitment to the septal ring of downstream cell division proteins. The chain is Cell division protein ZipA from Actinobacillus pleuropneumoniae serotype 7 (strain AP76).